Here is a 72-residue protein sequence, read N- to C-terminus: LVMAGVESVKDGYIVDDRNCTYFCGRNAYCNEECTKLKGESGYCQWASPYGNACYCYKVPDHVRTKGPGRCN.

Residues 1-8 form the signal peptide; sequence LVMAGVES. The LCN-type CS-alpha/beta domain occupies 10–72; the sequence is KDGYIVDDRN…VRTKGPGRCN (63 aa). 4 cysteine pairs are disulfide-bonded: Cys20–Cys71, Cys24–Cys44, Cys30–Cys54, and Cys34–Cys56. An Asparagine amide modification is found at Asn72.

Belongs to the long (4 C-C) scorpion toxin superfamily. Sodium channel inhibitor family. Alpha subfamily. In terms of processing, when the toxin is not amidated, there are 75% loss of toxicity to mice, and total incapacity to bind rat brain synaptosomes. Expressed by the venom gland.

It is found in the secreted. Functionally, alpha toxins bind voltage-independently at site-3 of sodium channels (Nav) and inhibit the inactivation of the activated channels, thereby blocking neuronal transmission. Is active against mammals and binds with high affinity to rat brain synaptosomes. This chain is Alpha-mammal toxin Bot3, found in Buthus occitanus tunetanus (Common European scorpion).